The chain runs to 246 residues: 4-hydroxy-tetrahydrodipicolinate reductase (246 aa).

NAD(+) contacts are provided by residues 8 to 13 (GALGRM), Asp-34, 74 to 76 (GTT), and 101 to 104 (APNF). His-131 acts as the Proton donor/acceptor in catalysis. His-132 is a (S)-2,3,4,5-tetrahydrodipicolinate binding site. Lys-135 serves as the catalytic Proton donor. 141 to 142 (GT) lines the (S)-2,3,4,5-tetrahydrodipicolinate pocket.

It belongs to the DapB family.

Its subcellular location is the cytoplasm. The catalysed reaction is (S)-2,3,4,5-tetrahydrodipicolinate + NAD(+) + H2O = (2S,4S)-4-hydroxy-2,3,4,5-tetrahydrodipicolinate + NADH + H(+). It catalyses the reaction (S)-2,3,4,5-tetrahydrodipicolinate + NADP(+) + H2O = (2S,4S)-4-hydroxy-2,3,4,5-tetrahydrodipicolinate + NADPH + H(+). It participates in amino-acid biosynthesis; L-lysine biosynthesis via DAP pathway; (S)-tetrahydrodipicolinate from L-aspartate: step 4/4. In terms of biological role, catalyzes the conversion of 4-hydroxy-tetrahydrodipicolinate (HTPA) to tetrahydrodipicolinate. This is 4-hydroxy-tetrahydrodipicolinate reductase from Thermobifida fusca (strain YX).